We begin with the raw amino-acid sequence, 398 residues long: Elongation factor Tu (398 aa).

Positions 10–207 (KPHVNIGTIG…TADEYIPEPE (198 aa)) constitute a tr-type G domain. The G1 stretch occupies residues 19-26 (GHVDHGKT). 19 to 26 (GHVDHGKT) contacts GTP. T26 is a Mg(2+) binding site. The tract at residues 63–67 (GITIN) is G2. Positions 84–87 (DAPG) are G3. Residues 84-88 (DAPGH) and 139-142 (NKID) each bind GTP. Residues 139-142 (NKID) form a G4 region. The segment at 177-179 (SAL) is G5.

The protein belongs to the TRAFAC class translation factor GTPase superfamily. Classic translation factor GTPase family. EF-Tu/EF-1A subfamily. In terms of assembly, monomer.

It is found in the cytoplasm. The enzyme catalyses GTP + H2O = GDP + phosphate + H(+). GTP hydrolase that promotes the GTP-dependent binding of aminoacyl-tRNA to the A-site of ribosomes during protein biosynthesis. This chain is Elongation factor Tu, found in Streptococcus uberis (strain ATCC BAA-854 / 0140J).